Consider the following 1017-residue polypeptide: Putative calcium-transporting ATPase 13, plasma membrane-type (1017 aa).

Met1 is modified (N-acetylmethionine). Residues 1-147 lie on the Cytoplasmic side of the membrane; that stretch reads MRRNVSDHAE…NTYTRQPSKG (147 aa). Residues 20–31 are interaction with calmodulin; sequence LLELPKTLSKSN. Residues 148-168 traverse the membrane as a helical segment; the sequence is LFHFVVEAFKDLTILILLGCA. The Lumenal segment spans residues 169–186; that stretch reads TLSLGFGIKEHGLKEGWY. The chain crosses the membrane as a helical span at residues 187-207; it reads DGGSIFVAVFLVVAVSAVSNF. Topologically, residues 208–336 are cytoplasmic; that stretch reads RQNRQFDKLS…NEQTPLQSRL (129 aa). A helical transmembrane segment spans residues 337–356; the sequence is DKLTSSIGKVGLLVAFLVLL. The Lumenal segment spans residues 357–393; it reads VLLIRYFTGTTKDESGNREYNGKTTKSDEIVNAVVKM. The helical transmembrane segment at 394-411 threads the bilayer; the sequence is VAAAVTIIVVAIPEGLPL. Residues 412 to 802 lie on the Cytoplasmic side of the membrane; the sequence is AVTLTLAYSM…KWGRCVYNNI (391 aa). Asp449 serves as the catalytic 4-aspartylphosphate intermediate. Mg(2+) is bound by residues Asp747 and Asp751. A helical membrane pass occupies residues 803 to 821; sequence QKFIQFQLTVNVAALVINF. Residues 822 to 832 lie on the Lumenal side of the membrane; that stretch reads VAAVSAGDVPL. A helical transmembrane segment spans residues 833–853; that stretch reads TAVQLLWVNLIMDTLGALALA. Residues 854 to 873 are Cytoplasmic-facing; sequence TEKPTNDLMKKKPIGRVAPL. Residues 874-896 traverse the membrane as a helical segment; it reads ITNIMWRNLLAQAFYQISVLLVL. Topologically, residues 897–905 are lumenal; it reads QFRGRSIFN. A helical membrane pass occupies residues 906 to 926; it reads VTEKVKNTLIFNTFVLCQVFN. Residues 927 to 944 lie on the Cytoplasmic side of the membrane; it reads EFNARSLEKKNVFKGLHK. A helical transmembrane segment spans residues 945–966; sequence NRLFIGIIVVTVVLQVVMVEFL. The Lumenal segment spans residues 967–976; sequence KRFADTERLN. Residues 977-998 form a helical membrane-spanning segment; that stretch reads LGQWGVCIAIAAASWPIGWLVK. Topologically, residues 999–1002 are cytoplasmic; that stretch reads SVPV.

The protein belongs to the cation transport ATPase (P-type) (TC 3.A.3) family. Type IIB subfamily.

It is found in the membrane. The enzyme catalyses Ca(2+)(in) + ATP + H2O = Ca(2+)(out) + ADP + phosphate + H(+). Activated by calmodulin. In terms of biological role, this magnesium-dependent enzyme catalyzes the hydrolysis of ATP coupled with the translocation of calcium from the cytosol out of the cell or into organelles. This chain is Putative calcium-transporting ATPase 13, plasma membrane-type (ACA13), found in Arabidopsis thaliana (Mouse-ear cress).